The primary structure comprises 134 residues: Ribulose bisphosphate carboxylase small subunit (134 aa).

The protein belongs to the RuBisCO small chain family. As to quaternary structure, heterohexadecamer of 8 large and 8 small subunits.

Functionally, ruBisCO catalyzes two reactions: the carboxylation of D-ribulose 1,5-bisphosphate, the primary event in carbon dioxide fixation, as well as the oxidative fragmentation of the pentose substrate. Both reactions occur simultaneously and in competition at the same active site. Although the small subunit is not catalytic it is essential for maximal activity. In Bradyrhizobium diazoefficiens (strain JCM 10833 / BCRC 13528 / IAM 13628 / NBRC 14792 / USDA 110), this protein is Ribulose bisphosphate carboxylase small subunit.